A 111-amino-acid polypeptide reads, in one-letter code: Ferredoxin, 2Fe-2S (111 aa).

Positions 10, 23, 56, and 60 each coordinate [2Fe-2S] cluster.

In terms of assembly, homodimer in solution. [2Fe-2S] cluster is required as a cofactor.

In terms of biological role, ferredoxins are iron-sulfur proteins that transfer electrons in a wide variety of metabolic reactions. The sequence is that of Ferredoxin, 2Fe-2S (fdx4) from Aquifex aeolicus (strain VF5).